A 154-amino-acid polypeptide reads, in one-letter code: Cell cycle regulator of non-homologous end joining (154 aa).

Residue Met-1 is modified to N-acetylmethionine. The KBM motif lies at 1 to 21; that stretch reads METLKSENKKRVLPSWMTAPV. Positions 77–144 are disordered; the sequence is EEPTLVAPDK…RSPEEEEEDA (68 aa). Low complexity predominate over residues 95 to 105; the sequence is ASPHTSSPGSS. The XLM motif lies at 144-154; the sequence is ALKYVREIFFS.

In terms of assembly, interacts (via KBM motif) with XRCC5/Ku80 and XRCC6/Ku70 heterodimer. Interacts (via XLF motif) with TRIM28/KAP1, ATM, MRE11, NBN and RAD50. Interacts with splicing factor SF3B1. Interacts with ERCC6L2; this interaction is DNA independent.

It localises to the cytoplasm. Its subcellular location is the nucleus. The protein localises to the chromosome. Functionally, cell-cycle-specific regulator of classical non-homologous end joining (NHEJ) of DNA double-strand break (DSB) repair, which can act both as an activator or inhibitor of NHEJ, depending on the cell cycle phase. Acts as a regulator of DNA repair pathway choice by specifically inhibiting classical NHEJ during the S and G2 phases, thereby promoting error-free repair by homologous recombination during cell cycle phases when sister chromatids are present. Preferentially protects single-stranded overhangs at break sites by inhibiting classical NHEJ, thereby creating a local environment that favors homologous recombination. Acts via interaction with XRCC5/Ku80 and XRCC6/Ku70. In contrast, acts as an activator of NHEJ during G1 phase of the cell cycle: promotes classical NHEJ in G1 phase cells via multivalent interactions that increase the affinity of DNA damage response proteins for DSB-associated chromatin. Also involved in immunoglobulin V(D)J recombination. May act as a regulator of proteasome. In case of infection by a retrovirus, may regulate the proteasome during the uncoating phase of retrovirus. The polypeptide is Cell cycle regulator of non-homologous end joining (Cricetulus griseus (Chinese hamster)).